A 207-amino-acid polypeptide reads, in one-letter code: dTTP/UTP pyrophosphatase (207 aa).

Asp-79 acts as the Proton acceptor in catalysis.

It belongs to the Maf family. YhdE subfamily. A divalent metal cation serves as cofactor.

It is found in the cytoplasm. The enzyme catalyses dTTP + H2O = dTMP + diphosphate + H(+). The catalysed reaction is UTP + H2O = UMP + diphosphate + H(+). Its function is as follows. Nucleoside triphosphate pyrophosphatase that hydrolyzes dTTP and UTP. May have a dual role in cell division arrest and in preventing the incorporation of modified nucleotides into cellular nucleic acids. The sequence is that of dTTP/UTP pyrophosphatase from Rhodopseudomonas palustris (strain ATCC BAA-98 / CGA009).